Here is a 508-residue protein sequence, read N- to C-terminus: Probable G-protein coupled receptor 101 (508 aa).

Residues 1–35 are Extracellular-facing; that stretch reads MTSTCTNSTRESNSSHTCMPLSKMPISLAHGIIRS. N-linked (GlcNAc...) asparagine glycans are attached at residues Asn7 and Asn13. A helical transmembrane segment spans residues 36–56; it reads TVLVIFLAASFVGNIVLALVL. At 57 to 68 the chain is on the cytoplasmic side; that stretch reads QRKPQLLQVTNR. A helical transmembrane segment spans residues 69 to 89; the sequence is FIFNLLVTDLLQISLVAPWVV. The Extracellular portion of the chain corresponds to 90-106; it reads ATSVPLFWPLNSHFCTA. Cys104 and Cys182 are oxidised to a cystine. A helical transmembrane segment spans residues 107–127; that stretch reads LVSLTHLFAFASVNTIVVVSV. The Cytoplasmic portion of the chain corresponds to 128 to 149; sequence DRYLSIIHPLSYPSKMTQRRGY. Residues 150-170 traverse the membrane as a helical segment; that stretch reads LLLYGTWIVAILQSTPPLYGW. Residues 171 to 196 lie on the Extracellular side of the membrane; that stretch reads GQAAFDERNALCSMIWGASPSYTILS. Residues 197-217 form a helical membrane-spanning segment; the sequence is VVSFIVIPLIVMIACYSVVFC. Over 218-399 the chain is Cytoplasmic; sequence AARRQHALLY…PRCYQCKAAK (182 aa). Positions 244–338 are disordered; that stretch reads NEDEEGAEKK…ENSMKADKGR (95 aa). Composition is skewed to basic and acidic residues over residues 250 to 288 and 318 to 338; these read AEKK…KAKE and MEGK…DKGR. The chain crosses the membrane as a helical span at residues 400–420; sequence VIFIIIFSYVLSLGPYCFLAV. The Extracellular segment spans residues 421–433; it reads LAVWVDVETQVPQ. Residues 434 to 454 traverse the membrane as a helical segment; it reads WVITIIIWLFFLQCCIHPYVY. The Cytoplasmic segment spans residues 455-508; sequence GYMHKTIKKEIQDMLKKFFCKEKPPKEDSHPDLPGTEGGTEGKIVPSYDSATFP. A compositionally biased stretch (basic and acidic residues) spans 476–485; sequence EKPPKEDSHP. The tract at residues 476–508 is disordered; it reads EKPPKEDSHPDLPGTEGGTEGKIVPSYDSATFP.

Belongs to the G-protein coupled receptor 1 family.

It localises to the cell membrane. Its function is as follows. Orphan receptor. The chain is Probable G-protein coupled receptor 101 (GPR101) from Homo sapiens (Human).